Here is a 388-residue protein sequence, read N- to C-terminus: MEPLYEEYLTHSGTIVKPYYWLSVSLNCTNCPYHIRTGEEARVPYTEFHQTFGFPWSTYPQTKHLTFYELRSSSGNLIQKGLASNCTGSHTHPESMLFERDGYLDSLIFHDSNIRHIILYSNNSPCDEANHCCISKMYNFLMNYPEVTLSVFFSQLYHTENQFPTSAWNREALRGLASLWPQVTLSAISGGIWQSILETFVSGISEGLTAVRPFTAGRTLTDRYNAYEINCITEVKPYFTDALHSWQKENQDQKVWAASENQPLHNTTPAQWQPDMSQDCRTPAVFMLVPYRDLPPIHVNPSPQKPRTVVRHLNTLQLSASKVKALRKSPSGRPVKKEEARKGSTRSQEANETNKSKWKKQTLFIKSNICHLLEREQKKIGILSSWSV.

In terms of domain architecture, CMP/dCMP-type deaminase spans 60–176; it reads PQTKHLTFYE…AWNREALRGL (117 aa). Histidine 92 is a Zn(2+) binding site. The active-site Proton donor is the glutamate 94. 2 residues coordinate Zn(2+): cysteine 126 and cysteine 133. The interval 322–356 is disordered; sequence KVKALRKSPSGRPVKKEEARKGSTRSQEANETNKS.

It belongs to the cytidine and deoxycytidylate deaminase family. Zn(2+) serves as cofactor.

Its function is as follows. Putative C to U editing enzyme whose physiological substrate is not yet known. This is Putative C-&gt;U-editing enzyme APOBEC-4 (Apobec4) from Rattus norvegicus (Rat).